The sequence spans 215 residues: Cytochrome b6 (215 aa).

The helical transmembrane segment at 32–52 (IFYCLGGITLTCFLVQVATGF) threads the bilayer. Cys35 contributes to the heme c binding site. Positions 86 and 100 each coordinate heme b. A run of 3 helical transmembrane segments spans residues 90–110 (ASMM…TGGF), 116–136 (LTWV…VTGY), and 186–206 (LHTF…FSMI). His187 and His202 together coordinate heme b.

Belongs to the cytochrome b family. PetB subfamily. The 4 large subunits of the cytochrome b6-f complex are cytochrome b6, subunit IV (17 kDa polypeptide, PetD), cytochrome f and the Rieske protein, while the 4 small subunits are PetG, PetL, PetM and PetN. The complex functions as a dimer. Requires heme b as cofactor. It depends on heme c as a cofactor.

The protein resides in the plastid. It localises to the chloroplast thylakoid membrane. In terms of biological role, component of the cytochrome b6-f complex, which mediates electron transfer between photosystem II (PSII) and photosystem I (PSI), cyclic electron flow around PSI, and state transitions. The polypeptide is Cytochrome b6 (Piper cenocladum (Ant piper)).